Reading from the N-terminus, the 352-residue chain is Aspartic protease Bla g 2 (352 aa).

Positions 1–19 are cleaved as a signal peptide; sequence MIGLKLVTVLFAVATITHA. A propeptide spans 20–24 (removed in mature form); it reads AELQR. A Peptidase A1 domain is found at 39–346; the sequence is YAGITKIGNQ…NWENKTMGFG (308 aa). Asp-55 is an active-site residue. 3 disulfide bridges follow: Cys-59–Cys-151, Cys-68–Cys-73, and Cys-75–Cys-136. Asn-117 is a glycosylation site (N-linked (GlcNAc...) asparagine). His-178 and His-186 together coordinate Zn(2+). Residue Asp-239 is part of the active site. 2 disulfide bridges follow: Cys-261/Cys-272 and Cys-276/Cys-309. Asn-295 is a glycosylation site (N-linked (GlcNAc...) asparagine). Residues Asp-326 and Asp-330 each contribute to the Zn(2+) site. Residue Asn-340 is glycosylated (N-linked (GlcNAc...) asparagine).

Belongs to the peptidase A1 family. In terms of assembly, homodimer.

Functionally, functions as a digestive enzyme in the cockroach. This chain is Aspartic protease Bla g 2, found in Blattella germanica (German cockroach).